A 148-amino-acid polypeptide reads, in one-letter code: Lipoprotein signal peptidase (148 aa).

Helical transmembrane passes span 57 to 77 (VLLVLVTLLIMIGVIYYFIKY) and 88 to 105 (VSFIVSGALGNLYDRIFY). Active-site residues include aspartate 110 and aspartate 129. Residues 124–144 (TFNIADILVVVGTIMLAIFLL) traverse the membrane as a helical segment.

This sequence belongs to the peptidase A8 family.

Its subcellular location is the cell membrane. It carries out the reaction Release of signal peptides from bacterial membrane prolipoproteins. Hydrolyzes -Xaa-Yaa-Zaa-|-(S,diacylglyceryl)Cys-, in which Xaa is hydrophobic (preferably Leu), and Yaa (Ala or Ser) and Zaa (Gly or Ala) have small, neutral side chains.. It functions in the pathway protein modification; lipoprotein biosynthesis (signal peptide cleavage). This protein specifically catalyzes the removal of signal peptides from prolipoproteins. The protein is Lipoprotein signal peptidase of Clostridium novyi (strain NT).